Here is a 98-residue protein sequence, read N- to C-terminus: Plastocyanin (98 aa).

The Plastocyanin-like domain maps to 1–98 (AQIVKLGGDD…AGMKMTITVQ (98 aa)). Cu cation-binding residues include histidine 38, cysteine 83, histidine 86, and methionine 91.

The protein belongs to the plastocyanin family. Cu(2+) is required as a cofactor.

Its subcellular location is the plastid. It localises to the chloroplast thylakoid membrane. In terms of biological role, participates in electron transfer between P700 and the cytochrome b6-f complex in photosystem I. This Ulva arasakii (Sea lettuce) protein is Plastocyanin (PETE).